Reading from the N-terminus, the 261-residue chain is Tyrosine phosphatase-like protein H5 (261 aa).

Positions 26–261 (LIKKEHDKVL…ESVEQEYFVP (236 aa)) constitute a Tyrosine-protein phosphatase domain.

Belongs to the protein-tyrosine phosphatase family.

The protein is Tyrosine phosphatase-like protein H5 (H6) of Microplitis demolitor bracovirus (isolate Webb) (MdBV).